The following is a 608-amino-acid chain: Auxin response factor 3 (608 aa).

The tract at residues methionine 1 to serine 40 is disordered. Low complexity predominate over residues glutamine 18–serine 40. The TF-B3 DNA-binding region spans phenylalanine 159–serine 261.

The protein belongs to the ARF family. As to quaternary structure, homo and heterodimers. As to expression, expressed in the whole plant.

The protein localises to the nucleus. In terms of biological role, auxin response factors (ARFs) are transcriptional factors that bind specifically to the DNA sequence 5'-TGTCTC-3' found in the auxin-responsive promoter elements (AuxREs). Could act as transcriptional activator or repressor. Formation of heterodimers with Aux/IAA proteins may alter their ability to modulate early auxin response genes expression. Involved in the establishment or elaboration of tissue patterning during gynoecial development. The polypeptide is Auxin response factor 3 (ARF3) (Arabidopsis thaliana (Mouse-ear cress)).